A 519-amino-acid polypeptide reads, in one-letter code: Aldehyde dehydrogenase X, mitochondrial (519 aa).

Residues 1–19 (MLTARLLLPRLLCLQGRTT) constitute a mitochondrion transit peptide. An N6-acetyllysine modification is found at Lys-53. N6-acetyllysine; alternate is present on Lys-54. Lys-54 bears the N6-succinyllysine; alternate mark. Lys-83 carries the N6-succinyllysine modification. An NAD(+)-binding site is contributed by 264-269 (GSTEVG). The active-site Proton acceptor is the Glu-287. Catalysis depends on Cys-321, which acts as the Nucleophile. Lys-366, Lys-385, Lys-401, Lys-416, and Lys-428 each carry N6-acetyllysine; alternate. N6-succinyllysine; alternate is present on residues Lys-366, Lys-385, Lys-401, Lys-416, and Lys-428. Lys-431 is modified (N6-acetyllysine).

It belongs to the aldehyde dehydrogenase family. Homotetramer.

It is found in the mitochondrion matrix. The enzyme catalyses an aldehyde + NAD(+) + H2O = a carboxylate + NADH + 2 H(+). It participates in alcohol metabolism; ethanol degradation; acetate from ethanol: step 2/2. ALDHs play a major role in the detoxification of alcohol-derived acetaldehyde. They are involved in the metabolism of corticosteroids, biogenic amines, neurotransmitters, and lipid peroxidation. The sequence is that of Aldehyde dehydrogenase X, mitochondrial (Aldh1b1) from Mus musculus (Mouse).